The sequence spans 485 residues: NADH-quinone oxidoreductase subunit N (485 aa).

14 helical membrane-spanning segments follow: residues 8-28, 35-55, 71-91, 105-125, 127-147, 159-179, 203-223, 235-255, 271-291, 297-317, 326-346, 373-393, 408-430, and 455-475; these read LIAL…MLSI, FLNA…LWFV, GFAM…CTFA, FYLL…ANHL, SLFL…GYAF, YTIL…LVYA, LLAG…LVPF, PAPV…GVVM, VVLA…ALSQ, LLGY…IALQ, VGVY…VVSL, AAVM…LGFI, WWLV…RVAV, and IVVL…QPLI.

This sequence belongs to the complex I subunit 2 family. NDH-1 is composed of 13 different subunits. Subunits NuoA, H, J, K, L, M, N constitute the membrane sector of the complex.

It localises to the cell inner membrane. The catalysed reaction is a quinone + NADH + 5 H(+)(in) = a quinol + NAD(+) + 4 H(+)(out). Functionally, NDH-1 shuttles electrons from NADH, via FMN and iron-sulfur (Fe-S) centers, to quinones in the respiratory chain. The immediate electron acceptor for the enzyme in this species is believed to be ubiquinone. Couples the redox reaction to proton translocation (for every two electrons transferred, four hydrogen ions are translocated across the cytoplasmic membrane), and thus conserves the redox energy in a proton gradient. This is NADH-quinone oxidoreductase subunit N from Shigella flexneri.